The primary structure comprises 637 residues: tRNA-dihydrouridine(47) synthase [NAD(P)(+)]-like (637 aa).

3 disordered regions span residues 1–21 (MAET…ACER), 41–63 (LDGD…EPGA), and 85–105 (ERQV…VKPA). The span at 89 to 104 (PKRARGQNKSRPHVKP) shows a compositional bias: basic residues. 2 C3H1-type zinc fingers span residues 107 to 137 (YDKD…HDVG) and 145 to 175 (ADLG…HLGP). Thr260 carries the phosphothreonine modification. Phosphoserine occurs at positions 263 and 264. FMN contacts are provided by residues 298-300 (PLT) and Gln352. Catalysis depends on Cys383, which acts as the Proton donor. Lys403 is covalently cross-linked (Glycyl lysine isopeptide (Lys-Gly) (interchain with G-Cter in SUMO2)). FMN-binding positions include Lys422, His452, 484-486 (NGD), and 507-508 (AR).

This sequence belongs to the Dus family. Dus3 subfamily. FMN is required as a cofactor.

It catalyses the reaction 5,6-dihydrouridine(47) in tRNA + NAD(+) = uridine(47) in tRNA + NADH + H(+). It carries out the reaction 5,6-dihydrouridine(47) in tRNA + NADP(+) = uridine(47) in tRNA + NADPH + H(+). The catalysed reaction is a 5,6-dihydrouridine in mRNA + NAD(+) = a uridine in mRNA + NADH + H(+). The enzyme catalyses a 5,6-dihydrouridine in mRNA + NADP(+) = a uridine in mRNA + NADPH + H(+). Catalyzes the synthesis of dihydrouridine, a modified base, in various RNAs, such as tRNAs, mRNAs and some long non-coding RNAs (lncRNAs). Mainly modifies the uridine in position 47 (U47) in the D-loop of most cytoplasmic tRNAs. Also able to mediate the formation of dihydrouridine in some mRNAs, thereby regulating their translation. The chain is tRNA-dihydrouridine(47) synthase [NAD(P)(+)]-like from Mus musculus (Mouse).